Here is a 576-residue protein sequence, read N- to C-terminus: Calcium-dependent protein kinase 11 (576 aa).

G2 carries N-myristoyl glycine lipidation. Residues 27–88 (PADAAPPALP…ANKAAPKVKR (62 aa)) form a disordered region. Low complexity predominate over residues 41-56 (APSDQAPEPVTIPPSE). A Protein kinase domain is found at 113-371 (YTIGKKLGQG…AHEALCHPWV (259 aa)). Residues 119–127 (LGQGQFGTT) and K142 contribute to the ATP site. D237 acts as the Proton acceptor in catalysis. Positions 377–407 (APDKPLDSAVLSRLKQFSAMNKLKKMALRVI) are autoinhibitory domain. 4 EF-hand domains span residues 414-449 (EEIAGLKEMFKMLDTDNSGHITLEELKTGLQRVGAN), 450-485 (LMDSEIDALMEAADIDNSGTIDYGEFIAATLHINKV), 486-521 (EKEDKLFAAFSYFDKDGSGYITQDELQKACEEFGIG), and 522-555 (DTRIEDIIGDIDQDNDGRIDYNEFVEMMQKGNNA). D427, D429, S431, H433, E438, D463, D465, S467, T469, E474, D499, D501, S503, Y505, E510, D533, D535, D537, R539, and E544 together coordinate Ca(2+).

Belongs to the protein kinase superfamily. Ser/Thr protein kinase family. CDPK subfamily.

The protein localises to the membrane. The enzyme catalyses L-seryl-[protein] + ATP = O-phospho-L-seryl-[protein] + ADP + H(+). It carries out the reaction L-threonyl-[protein] + ATP = O-phospho-L-threonyl-[protein] + ADP + H(+). Activated by calcium. Autophosphorylation may play an important role in the regulation of the kinase activity. Its function is as follows. May play a role in signal transduction pathways that involve calcium as a second messenger. The protein is Calcium-dependent protein kinase 11 of Oryza sativa subsp. japonica (Rice).